Reading from the N-terminus, the 53-residue chain is UPF0391 membrane protein BPSS2216 (53 aa).

The next 2 membrane-spanning stretches (helical) occupy residues 5–25 and 30–50; these read ALVF…GIAA and IAKI…VLGV.

Belongs to the UPF0391 family.

Its subcellular location is the cell membrane. The sequence is that of UPF0391 membrane protein BPSS2216 from Burkholderia pseudomallei (strain K96243).